Reading from the N-terminus, the 376-residue chain is Succinyl-diaminopimelate desuccinylase (376 aa).

Residue histidine 67 participates in Zn(2+) binding. Residue aspartate 69 is part of the active site. Residue aspartate 100 participates in Zn(2+) binding. Glutamate 134 functions as the Proton acceptor in the catalytic mechanism. Positions 135, 163, and 349 each coordinate Zn(2+).

Belongs to the peptidase M20A family. DapE subfamily. In terms of assembly, homodimer. The cofactor is Zn(2+). Requires Co(2+) as cofactor.

The enzyme catalyses N-succinyl-(2S,6S)-2,6-diaminopimelate + H2O = (2S,6S)-2,6-diaminopimelate + succinate. Its pathway is amino-acid biosynthesis; L-lysine biosynthesis via DAP pathway; LL-2,6-diaminopimelate from (S)-tetrahydrodipicolinate (succinylase route): step 3/3. Catalyzes the hydrolysis of N-succinyl-L,L-diaminopimelic acid (SDAP), forming succinate and LL-2,6-diaminopimelate (DAP), an intermediate involved in the bacterial biosynthesis of lysine and meso-diaminopimelic acid, an essential component of bacterial cell walls. This chain is Succinyl-diaminopimelate desuccinylase, found in Pseudoalteromonas translucida (strain TAC 125).